The primary structure comprises 504 residues: 2-methylcitrate dehydratase 2 (504 aa).

This sequence belongs to the PrpD family. Monomer.

The catalysed reaction is (2S,3S)-2-methylcitrate = 2-methyl-cis-aconitate + H2O. It carries out the reaction citrate = D-threo-isocitrate. It participates in organic acid metabolism; propanoate degradation. It functions in the pathway carbohydrate metabolism; tricarboxylic acid cycle; isocitrate from oxaloacetate: step 1/2. In terms of biological role, involved in the catabolism of short chain fatty acids (SCFA) via the 2-methylcitrate cycle I (propionate degradation route). Catalyzes the dehydration of 2-methylcitrate (2-MC) to yield the cis isomer 2-methyl-aconitate. Could also catalyze the dehydration of citrate and the hydration of cis-aconitate. This is 2-methylcitrate dehydratase 2 (prpD2) from Corynebacterium glutamicum (strain ATCC 13032 / DSM 20300 / JCM 1318 / BCRC 11384 / CCUG 27702 / LMG 3730 / NBRC 12168 / NCIMB 10025 / NRRL B-2784 / 534).